A 124-amino-acid chain; its full sequence is Ribonuclease pancreatic (124 aa).

Substrate is bound by residues K7 and R10. Residue H12 is the Proton acceptor of the active site. Disulfide bonds link C26/C84, C40/C95, C58/C110, and C65/C72. N-linked (GlcNAc...) asparagine glycosylation is present at N34. Substrate is bound by residues 41–45 (KPVNT), K66, and R85. Catalysis depends on H119, which acts as the Proton donor.

It belongs to the pancreatic ribonuclease family. As to quaternary structure, monomer. Interacts with and forms tight 1:1 complexes with RNH1. Dimerization of two such complexes may occur. Interaction with RNH1 inhibits this protein. In terms of tissue distribution, pancreas.

It localises to the secreted. It carries out the reaction an [RNA] containing cytidine + H2O = an [RNA]-3'-cytidine-3'-phosphate + a 5'-hydroxy-ribonucleotide-3'-[RNA].. The enzyme catalyses an [RNA] containing uridine + H2O = an [RNA]-3'-uridine-3'-phosphate + a 5'-hydroxy-ribonucleotide-3'-[RNA].. Endonuclease that catalyzes the cleavage of RNA on the 3' side of pyrimidine nucleotides. Acts on single-stranded and double-stranded RNA. The polypeptide is Ribonuclease pancreatic (RNASE1) (Eudorcas thomsonii (Thomson's gazelle)).